A 142-amino-acid chain; its full sequence is Hemoglobin subunit alpha-2 (142 aa).

The 141-residue stretch at Val-2–Arg-142 folds into the Globin domain. Residue His-59 coordinates O2. Position 88 (His-88) interacts with heme b.

The protein belongs to the globin family. Heterotetramer of two alpha chains and two beta chains. Red blood cells.

Its function is as follows. Involved in oxygen transport from the lung to the various peripheral tissues. This chain is Hemoglobin subunit alpha-2, found in Bubalus bubalis (Domestic water buffalo).